The primary structure comprises 230 residues: UPF0173 metal-dependent hydrolase Acid_3917 (230 aa).

Belongs to the UPF0173 family.

This Solibacter usitatus (strain Ellin6076) protein is UPF0173 metal-dependent hydrolase Acid_3917.